The following is a 468-amino-acid chain: Zinc finger protein 672 (468 aa).

4 consecutive C2H2-type zinc fingers follow at residues 15-37 (YSCSVCGKSFQYSAVLLRHERAH), 43-65 (FRCLECGERCARASDLRVHRWTH), 71-93 (YICSECGQSFSHSSLLDLHLGTH), and 100-123 (CPCRLCGRRFPHVSALLLHRVRQH). The segment at 129–151 (HRCPLCARSFRQSALPFHLARAH) adopts a C2H2-type 5; degenerate zinc-finger fold. C2H2-type zinc fingers lie at residues 167–189 (YHCTQCPRAFHSSAGLRNHSRIH), 202–224 (HRCGVCGKSFSKSSTLTRHLQRH), 230–252 (FKCPECGKGFLESATLVRHQRTH), 258–280 (YACNDCGRCFSESSTLLRHQRSH), 286–308 (HICATCGKGFGQRYDLVVHQRSH), 314–336 (FPCPECGRGFTDRSDLTKHLRTH), 342–364 (YHCELCGKRFTCISNLNVHLRNH), 370–392 (HKCPECGKSFSVASKLALHRKTH), and 398–420 (AECTECGKFFSHGRSLSQHQRSH).

It belongs to the krueppel C2H2-type zinc-finger protein family.

The protein resides in the nucleus. May be involved in transcriptional regulation. In Rattus norvegicus (Rat), this protein is Zinc finger protein 672 (Znf672).